Reading from the N-terminus, the 103-residue chain is Large ribosomal subunit protein bL21 (103 aa).

The protein belongs to the bacterial ribosomal protein bL21 family. Part of the 50S ribosomal subunit. Contacts protein L20.

In terms of biological role, this protein binds to 23S rRNA in the presence of protein L20. The chain is Large ribosomal subunit protein bL21 from Acidithiobacillus ferrooxidans (strain ATCC 23270 / DSM 14882 / CIP 104768 / NCIMB 8455) (Ferrobacillus ferrooxidans (strain ATCC 23270)).